An 81-amino-acid chain; its full sequence is Cytochrome b559 subunit alpha (81 aa).

Residues R18 and H23 each coordinate heme. Residues 19-40 (YWVIHSITIPMLFIAGWLFVST) traverse the membrane as a helical segment.

The protein belongs to the PsbE/PsbF family. In terms of assembly, heterodimer of an alpha subunit and a beta subunit. PSII is composed of 1 copy each of membrane proteins PsbA, PsbB, PsbC, PsbD, PsbE, PsbF, PsbH, PsbI, PsbJ, PsbK, PsbL, PsbM, PsbT, PsbX, PsbY, PsbZ, Psb30/Ycf12, peripheral proteins PsbO, CyanoQ (PsbQ), PsbU, PsbV and a large number of cofactors. It forms dimeric complexes. It depends on heme b as a cofactor.

The protein resides in the cellular thylakoid membrane. This b-type cytochrome is tightly associated with the reaction center of photosystem II (PSII). PSII is a light-driven water:plastoquinone oxidoreductase that uses light energy to abstract electrons from H(2)O, generating O(2) and a proton gradient subsequently used for ATP formation. It consists of a core antenna complex that captures photons, and an electron transfer chain that converts photonic excitation into a charge separation. The protein is Cytochrome b559 subunit alpha of Synechocystis sp. (strain ATCC 27184 / PCC 6803 / Kazusa).